Reading from the N-terminus, the 143-residue chain is High mobility group protein B (143 aa).

Positions 1–22 are disordered; sequence MSKAASQYATLEDLPSKPKRPQ. Residues 18-86 constitute a DNA-binding region (HMG box); that stretch reads PKRPQTGFFI…TYDKQNDQWK (69 aa). Position 70 is a blocked amino end (Ala) (Ala-70). 2 stretches are compositionally biased toward basic and acidic residues: residues 100-120 and 131-143; these read AKKALKEKTKKSKAAEKELEK and AKKDDKKAPAKKK. The tract at residues 100–143 is disordered; that stretch reads AKKALKEKTKKSKAAEKELEKSKKKAPAAAPAKKDDKKAPAKKK.

It is found in the nucleus. The protein localises to the chromosome. The protein is High mobility group protein B of Tetrahymena thermophila.